Here is a 321-residue protein sequence, read N- to C-terminus: Probable arabinan endo-1,5-alpha-L-arabinosidase C (321 aa).

Positions Met-1 to Ala-18 are cleaved as a signal peptide. Asp-33 serves as the catalytic Proton acceptor. N-linked (GlcNAc...) asparagine glycosylation occurs at Asn-192. The active-site Proton donor is the Glu-200. Asn-224 carries an N-linked (GlcNAc...) asparagine glycan.

It belongs to the glycosyl hydrolase 43 family.

The protein localises to the secreted. It carries out the reaction Endohydrolysis of (1-&gt;5)-alpha-arabinofuranosidic linkages in (1-&gt;5)-arabinans.. It functions in the pathway glycan metabolism; L-arabinan degradation. Endo-1,5-alpha-L-arabinanase involved in degradation of pectin. Its preferred substrate is linear 1,5-alpha-L-arabinan. This chain is Probable arabinan endo-1,5-alpha-L-arabinosidase C (abnC), found in Aspergillus fumigatus (strain ATCC MYA-4609 / CBS 101355 / FGSC A1100 / Af293) (Neosartorya fumigata).